A 406-amino-acid polypeptide reads, in one-letter code: Zinc metalloprotease Rip1 (406 aa).

Residues 1 to 21 traverse the membrane as a helical segment; that stretch reads MMFGIGIVLFALAILVSVALH. His21 contacts Zn(2+). Glu22 is a catalytic residue. A Zn(2+)-binding site is contributed by His25. The helical transmembrane segment at 108–128 threads the bilayer; that stretch reads PAMNFVIGLVLIYGIAIVWGL. A PDZ domain is found at 125-209; the sequence is VWGLPNLHQP…RIEFKRDGRV (85 aa). Asp206 provides a ligand contact to Zn(2+). 2 helical membrane-spanning segments follow: residues 327–349 and 375–395; these read NFVL…IAVA and LMPA…LTVT.

It belongs to the peptidase M50B family. Requires Zn(2+) as cofactor.

The protein resides in the cell membrane. With respect to regulation, proteolysis is inhibited by Wag31; when Wag31 is non-functional oxidative stress increases proteolysis. In terms of biological role, a probable intramembrane site-2 protease (S2P) that cleaves type-2 transmembrane proteins within their membrane-spanning domains. Degrades PbpB (PBP3, FtsI) under conditions of oxidatives stress; degradation is inhibited by Wag31-PbpB interaction. Also cleaves anti-sigma factors RskA, RslA and RslM. Site-1 proteases have not yet been identified in this organism. Its function is as follows. Regulated intramembrane proteolysis (RIP) occurs when an extracytoplasmic signal (possibly oxidative stress) triggers a concerted proteolytic cascade to transmit information and elicit cellular responses. The membrane-spanning regulatory substrate protein (includes anti-sigma factors RskA, RslA, RsmA, and PbpB) is first cut extracytoplasmically (site-1 protease, S1P), then within the membrane itself (site-2 protease, S2P, this entry), while cytoplasmic proteases finish degrading the regulatory protein, liberating the effector protein (ECF sigma factors SigK, SigL and SigM). The protein is Zinc metalloprotease Rip1 (rip1) of Mycolicibacterium smegmatis (strain ATCC 700084 / mc(2)155) (Mycobacterium smegmatis).